The sequence spans 88 residues: UPF0335 protein M446_5200 (88 aa).

Belongs to the UPF0335 family.

This is UPF0335 protein M446_5200 from Methylobacterium sp. (strain 4-46).